An 80-amino-acid polypeptide reads, in one-letter code: Exodeoxyribonuclease 7 small subunit (80 aa).

It belongs to the XseB family. Heterooligomer composed of large and small subunits.

It localises to the cytoplasm. It carries out the reaction Exonucleolytic cleavage in either 5'- to 3'- or 3'- to 5'-direction to yield nucleoside 5'-phosphates.. Its function is as follows. Bidirectionally degrades single-stranded DNA into large acid-insoluble oligonucleotides, which are then degraded further into small acid-soluble oligonucleotides. The protein is Exodeoxyribonuclease 7 small subunit of Vibrio campbellii (strain ATCC BAA-1116).